The chain runs to 353 residues: Photosystem II protein D1 (353 aa).

At Thr-2 the chain carries N-acetylthreonine. Phosphothreonine is present on Thr-2. 3 consecutive transmembrane segments (helical) span residues Tyr-29 to Ser-46, His-118 to Leu-133, and Trp-142 to Ala-156. His-118 provides a ligand contact to chlorophyll a. Pheophytin a is bound at residue Tyr-126. Positions 170 and 189 each coordinate [CaMn4O5] cluster. Residues Phe-197–Leu-218 form a helical membrane-spanning segment. His-198 contacts chlorophyll a. A quinone contacts are provided by residues His-215 and Ser-264–Phe-265. His-215 is a binding site for Fe cation. Residue His-272 participates in Fe cation binding. Residues Phe-274–Leu-288 form a helical membrane-spanning segment. Residues His-332, Glu-333, Asp-342, and Ala-344 each contribute to the [CaMn4O5] cluster site. The propeptide occupies Ala-345–Gly-353.

Belongs to the reaction center PufL/M/PsbA/D family. PSII is composed of 1 copy each of membrane proteins PsbA, PsbB, PsbC, PsbD, PsbE, PsbF, PsbH, PsbI, PsbJ, PsbK, PsbL, PsbM, PsbT, PsbX, PsbY, PsbZ, Psb30/Ycf12, at least 3 peripheral proteins of the oxygen-evolving complex and a large number of cofactors. It forms dimeric complexes. The cofactor is The D1/D2 heterodimer binds P680, chlorophylls that are the primary electron donor of PSII, and subsequent electron acceptors. It shares a non-heme iron and each subunit binds pheophytin, quinone, additional chlorophylls, carotenoids and lipids. D1 provides most of the ligands for the Mn4-Ca-O5 cluster of the oxygen-evolving complex (OEC). There is also a Cl(-1) ion associated with D1 and D2, which is required for oxygen evolution. The PSII complex binds additional chlorophylls, carotenoids and specific lipids.. In terms of processing, tyr-161 forms a radical intermediate that is referred to as redox-active TyrZ, YZ or Y-Z. C-terminally processed by CTPA; processing is essential to allow assembly of the oxygen-evolving complex and thus photosynthetic growth.

It is found in the plastid. The protein localises to the chloroplast thylakoid membrane. It carries out the reaction 2 a plastoquinone + 4 hnu + 2 H2O = 2 a plastoquinol + O2. In terms of biological role, photosystem II (PSII) is a light-driven water:plastoquinone oxidoreductase that uses light energy to abstract electrons from H(2)O, generating O(2) and a proton gradient subsequently used for ATP formation. It consists of a core antenna complex that captures photons, and an electron transfer chain that converts photonic excitation into a charge separation. The D1/D2 (PsbA/PsbD) reaction center heterodimer binds P680, the primary electron donor of PSII as well as several subsequent electron acceptors. The polypeptide is Photosystem II protein D1 (Agrostis stolonifera (Creeping bentgrass)).